Here is a 121-residue protein sequence, read N- to C-terminus: uncharacterized protein (121 aa).

The disordered stretch occupies residues 20–98; the sequence is NEVRTSQSEV…PYYHGSKAST (79 aa). Positions 35 to 51 are enriched in basic and acidic residues; it reads KKSDNGEKDEKEEKELN.

This is an uncharacterized protein from Invertebrate iridescent virus 6 (IIV-6).